Consider the following 358-residue polypeptide: Isopentenyl-diphosphate delta-isomerase (358 aa).

12–13 lines the substrate pocket; the sequence is RK. FMN-binding positions include 69 to 71, serine 99, and asparagine 128; that span reads AMT. Glutamine 158 serves as a coordination point for substrate. A Mg(2+)-binding site is contributed by glutamate 159. FMN is bound by residues lysine 190, threonine 220, 267-269, and 288-289; these read GIR and AG.

It belongs to the IPP isomerase type 2 family. As to quaternary structure, homooctamer. Dimer of tetramers. FMN is required as a cofactor. The cofactor is NADPH. Requires Mg(2+) as cofactor.

The protein localises to the cytoplasm. The catalysed reaction is isopentenyl diphosphate = dimethylallyl diphosphate. Involved in the biosynthesis of isoprenoids. Catalyzes the 1,3-allylic rearrangement of the homoallylic substrate isopentenyl (IPP) to its allylic isomer, dimethylallyl diphosphate (DMAPP). In Listeria welshimeri serovar 6b (strain ATCC 35897 / DSM 20650 / CCUG 15529 / CIP 8149 / NCTC 11857 / SLCC 5334 / V8), this protein is Isopentenyl-diphosphate delta-isomerase.